Reading from the N-terminus, the 209-residue chain is Ribonuclease HII (209 aa).

The 198-residue stretch at 5–202 folds into the RNase H type-2 domain; sequence SMTLGIDEAG…KNRILNPKLL (198 aa). A divalent metal cation-binding residues include D11, E12, and D108.

It belongs to the RNase HII family. Mn(2+) serves as cofactor. It depends on Mg(2+) as a cofactor.

The protein resides in the cytoplasm. It carries out the reaction Endonucleolytic cleavage to 5'-phosphomonoester.. In terms of biological role, endonuclease that specifically degrades the RNA of RNA-DNA hybrids. The protein is Ribonuclease HII (rnhB) of Helicobacter pylori (strain J99 / ATCC 700824) (Campylobacter pylori J99).